The following is a 299-amino-acid chain: N-acetylmuramic acid 6-phosphate etherase (299 aa).

One can recognise an SIS domain in the interval 55-218 (CINCLEKNGR…STTVMVKMGK (164 aa)). The active-site Proton donor is glutamate 83. Glutamate 114 is a catalytic residue.

It belongs to the GCKR-like family. MurNAc-6-P etherase subfamily. Homodimer.

It catalyses the reaction N-acetyl-D-muramate 6-phosphate + H2O = N-acetyl-D-glucosamine 6-phosphate + (R)-lactate. Its pathway is amino-sugar metabolism; N-acetylmuramate degradation. Its function is as follows. Specifically catalyzes the cleavage of the D-lactyl ether substituent of MurNAc 6-phosphate, producing GlcNAc 6-phosphate and D-lactate. The protein is N-acetylmuramic acid 6-phosphate etherase of Pseudothermotoga lettingae (strain ATCC BAA-301 / DSM 14385 / NBRC 107922 / TMO) (Thermotoga lettingae).